A 279-amino-acid polypeptide reads, in one-letter code: Dermonecrotic toxin LspiSicTox-betaIE3ii (279 aa).

Residue His-5 is part of the active site. Residues Glu-25 and Asp-27 each coordinate Mg(2+). His-41 acts as the Nucleophile in catalysis. Intrachain disulfides connect Cys-45–Cys-51 and Cys-47–Cys-190. Residue Asp-85 participates in Mg(2+) binding.

Belongs to the arthropod phospholipase D family. Class II subfamily. Mg(2+) serves as cofactor. In terms of tissue distribution, expressed by the venom gland.

The protein localises to the secreted. It catalyses the reaction an N-(acyl)-sphingosylphosphocholine = an N-(acyl)-sphingosyl-1,3-cyclic phosphate + choline. The catalysed reaction is an N-(acyl)-sphingosylphosphoethanolamine = an N-(acyl)-sphingosyl-1,3-cyclic phosphate + ethanolamine. The enzyme catalyses a 1-acyl-sn-glycero-3-phosphocholine = a 1-acyl-sn-glycero-2,3-cyclic phosphate + choline. It carries out the reaction a 1-acyl-sn-glycero-3-phosphoethanolamine = a 1-acyl-sn-glycero-2,3-cyclic phosphate + ethanolamine. Functionally, dermonecrotic toxins cleave the phosphodiester linkage between the phosphate and headgroup of certain phospholipids (sphingolipid and lysolipid substrates), forming an alcohol (often choline) and a cyclic phosphate. This toxin acts on sphingomyelin (SM). It may also act on ceramide phosphoethanolamine (CPE), lysophosphatidylcholine (LPC) and lysophosphatidylethanolamine (LPE), but not on lysophosphatidylserine (LPS), and lysophosphatidylglycerol (LPG). It acts by transphosphatidylation, releasing exclusively cyclic phosphate products as second products. Induces dermonecrosis, hemolysis, increased vascular permeability, edema, inflammatory response, and platelet aggregation. In Loxosceles spinulosa (Recluse spider), this protein is Dermonecrotic toxin LspiSicTox-betaIE3ii.